The chain runs to 181 residues: Ribosome maturation factor RimM (181 aa).

Residues 103 to 181 form the PRC barrel domain; sequence EGDYYWSQLE…EMVVDWDPEF (79 aa).

It belongs to the RimM family. Binds ribosomal protein uS19.

It is found in the cytoplasm. In terms of biological role, an accessory protein needed during the final step in the assembly of 30S ribosomal subunit, possibly for assembly of the head region. Essential for efficient processing of 16S rRNA. May be needed both before and after RbfA during the maturation of 16S rRNA. It has affinity for free ribosomal 30S subunits but not for 70S ribosomes. This Marinomonas sp. (strain MWYL1) protein is Ribosome maturation factor RimM.